Consider the following 470-residue polypeptide: Beta-Ala-Xaa dipeptidase (470 aa).

Zn(2+) is bound at residue histidine 87. The active site involves aspartate 89. Aspartate 119 is a Zn(2+) binding site. Catalysis depends on glutamate 153, which acts as the Proton acceptor. 2 residues coordinate Zn(2+): glutamate 154 and aspartate 177. Residue arginine 350 participates in substrate binding. Histidine 439 contributes to the Zn(2+) binding site.

The protein belongs to the peptidase M20A family. Requires Zn(2+) as cofactor.

The protein resides in the cytoplasm. With respect to regulation, fully inhibited by 1,10-phenanthroline or EDTA. Its function is as follows. Is a relatively unspecific dipeptidase cleaving a variety of dipeptides, notably those with an N-terminal beta-Ala or D-Ala residue, e.g. carnosine (beta-Ala-His). To a lesser extent, also shows aminopeptidase activity, since it is able to catalyze the removal of the N-terminal amino acid from a few distinct tripeptides. The polypeptide is Beta-Ala-Xaa dipeptidase (pepV) (Lactobacillus delbrueckii subsp. lactis).